A 141-amino-acid chain; its full sequence is Hemoglobin subunit alpha (141 aa).

The Globin domain maps to 1-141 (VLSAADKSNV…VSTVLTSKYR (141 aa)). Ser3 carries the phosphoserine modification. 2 positions are modified to N6-succinyllysine: Lys7 and Lys11. An N6-acetyllysine; alternate modification is found at Lys16. Lys16 carries the N6-succinyllysine; alternate modification. A Phosphotyrosine modification is found at Tyr24. Ser35 is modified (phosphoserine). The residue at position 40 (Lys40) is an N6-succinyllysine. Ser49 carries the phosphoserine modification. His58 contributes to the O2 binding site. His87 contacts heme b. A Phosphoserine modification is found at Ser102. Phosphothreonine is present on Thr108. Ser124 carries the phosphoserine modification. A phosphothreonine mark is found at Thr134 and Thr137. Ser138 carries the post-translational modification Phosphoserine.

The protein belongs to the globin family. In terms of assembly, heterotetramer of two alpha chains and two beta chains. As to expression, red blood cells.

In terms of biological role, involved in oxygen transport from the lung to the various peripheral tissues. Hemopressin acts as an antagonist peptide of the cannabinoid receptor CNR1. Hemopressin-binding efficiently blocks cannabinoid receptor CNR1 and subsequent signaling. This Rangifer tarandus (Reindeer) protein is Hemoglobin subunit alpha (HBA).